Reading from the N-terminus, the 356-residue chain is Vesicular integral-membrane protein VIP36 (356 aa).

The signal sequence occupies residues 1–44; it reads MAAEGWIWRWGWGRRCLGRPGLPGPGPGPATPLFLLLLLGPVVA. Residues 45 to 322 lie on the Lumenal side of the membrane; that stretch reads DITDGNSEHL…FRSGPLTGWR (278 aa). One can recognise an L-type lectin-like domain in the interval 52 to 276; that stretch reads EHLKREHSLI…DIISMKLFQL (225 aa). A carbohydrate is bound by residues Ser96 and Asp131. Ca(2+) is bound by residues Asp162, Tyr164, and Asn166. 164–166 is a binding site for a carbohydrate; sequence YPN. The N-linked (GlcNAc...) asparagine glycan is linked to Asn183. His190 is an a carbohydrate binding site. Ca(2+) is bound at residue Asp193. Cys202 and Cys239 are disulfide-bonded. 260–262 is a binding site for a carbohydrate; the sequence is GDL. A helical membrane pass occupies residues 323–345; that stretch reads VFLLLLCALLGIIVCAVVGAVVF. Residues 346 to 356 are Cytoplasmic-facing; that stretch reads QKRQERNKRFY.

Monomer. Ca(2+) serves as cofactor. In terms of tissue distribution, expressed in kidney, liver, intestine, lung, spleen and heart. Low expression in brain.

The protein localises to the golgi apparatus membrane. Plays a role as an intracellular lectin in the early secretory pathway. Interacts with N-acetyl-D-galactosamine and high-mannose type glycans and may also bind to O-linked glycans. Involved in the transport and sorting of glycoproteins carrying high mannose-type glycans. The sequence is that of Vesicular integral-membrane protein VIP36 (LMAN2) from Canis lupus familiaris (Dog).